Here is a 107-residue protein sequence, read N- to C-terminus: RNA polymerase II transcriptional coactivator KIWI (107 aa).

The disordered stretch occupies residues 1 to 40; that stretch reads MSSRGKRKDEDVRASDDESETHAPAKKVAKPADDSDQSDD. A compositionally biased stretch (basic and acidic residues) spans 7 to 23; it reads RKDEDVRASDDESETHA.

It belongs to the transcriptional coactivator PC4 family.

It localises to the nucleus. General coactivator that functions cooperatively with TAFs and mediates functional interactions between upstream activators and the general transcriptional machinery. Binds single-stranded DNA. The polypeptide is RNA polymerase II transcriptional coactivator KIWI (KIWI) (Arabidopsis thaliana (Mouse-ear cress)).